A 602-amino-acid polypeptide reads, in one-letter code: Cholinesterase (602 aa).

An N-terminal signal peptide occupies residues 1 to 28 (MQSKGTIISIQFLLRFLLLWVLIGKSHT). Asn85 carries an N-linked (GlcNAc...) asparagine glycan. An intrachain disulfide couples Cys93 to Cys120. Asn134 is a glycosylation site (N-linked (GlcNAc...) asparagine). A substrate-binding site is contributed by 144 to 145 (GG). Ser226 functions as the Acyl-ester intermediate in the catalytic mechanism. Ser226 bears the Phosphoserine mark. Asn269 and Asn284 each carry an N-linked (GlcNAc...) asparagine glycan. Cys280 and Cys291 form a disulfide bridge. Glu353 serves as the catalytic Charge relay system. N-linked (GlcNAc...) asparagine glycosylation is present at Asn369. Residues Cys428 and Cys547 are joined by a disulfide bond. The active-site Charge relay system is the His466. N-linked (GlcNAc...) asparagine glycans are attached at residues Asn483, Asn509, Asn513, and Asn514.

Belongs to the type-B carboxylesterase/lipase family. In terms of assembly, homotetramer; disulfide-linked. Dimer of dimers.

The protein localises to the secreted. The catalysed reaction is an acylcholine + H2O = a carboxylate + choline + H(+). Functionally, esterase with broad substrate specificity. Contributes to the inactivation of the neurotransmitter acetylcholine. Can degrade neurotoxic organophosphate esters. The protein is Cholinesterase (BCHE) of Panthera tigris tigris (Bengal tiger).